A 238-amino-acid chain; its full sequence is Transmembrane protein 127 (238 aa).

M1 is modified (N-acetylmethionine). Residues 1 to 11 (MYAPGGAGLPG) are compositionally biased toward gly residues. Residues 1–27 (MYAPGGAGLPGGRRRRSPGSSALPKQP) are disordered. At S17 the chain carries Phosphoserine. 3 helical membrane passes run 96 to 116 (IAAF…LDVF), 130 to 150 (AFAH…SYWA), and 169 to 189 (VYVT…ASIL).

This sequence belongs to the TMEM127 family.

The protein localises to the cell membrane. It is found in the cytoplasm. Its function is as follows. Controls cell proliferation acting as a negative regulator of TOR signaling pathway mediated by mTORC1. May act as a tumor suppressor. The polypeptide is Transmembrane protein 127 (Tmem127) (Mus musculus (Mouse)).